The sequence spans 393 residues: Pyrimidine monooxygenase RutA (393 aa).

FMN contacts are provided by residues 79-80 (IK), asparagine 145, glutamate 154, 170-171 (RY), and serine 220.

Belongs to the NtaA/SnaA/DszA monooxygenase family. RutA subfamily.

The enzyme catalyses uracil + FMNH2 + NADH + O2 = (Z)-3-ureidoacrylate + FMN + NAD(+) + H2O + H(+). It carries out the reaction thymine + FMNH2 + NADH + O2 = (Z)-2-methylureidoacrylate + FMN + NAD(+) + H2O + H(+). Its function is as follows. Catalyzes the pyrimidine ring opening between N-3 and C-4 by an unusual flavin hydroperoxide-catalyzed mechanism, adding oxygen atoms in the process to yield ureidoacrylate peracid, that immediately reacts with FMN forming ureidoacrylate and FMN-N(5)-oxide. The FMN-N(5)-oxide reacts spontaneously with NADH to produce FMN. Requires the flavin reductase RutF to regenerate FMN in vivo. The polypeptide is Pyrimidine monooxygenase RutA (Escherichia coli O18:K1:H7 (strain IHE3034 / ExPEC)).